The following is a 78-amino-acid chain: Conotoxin CaFr179 (78 aa).

An N-terminal signal peptide occupies residues 1–19 (MSGLGIMVLTLLLLVFMEA). Residues 20–44 (SHQDAGEKQATQRDAINVRRRRSLA) constitute a propeptide that is removed on maturation. 3 disulfides stabilise this stretch: Cys52/Cys64, Cys56/Cys72, and Cys63/Cys76. A Phenylalanine amide modification is found at Phe77.

It belongs to the conotoxin O3 superfamily. In terms of tissue distribution, expressed by the venom duct.

It is found in the secreted. This chain is Conotoxin CaFr179, found in Conus caracteristicus (Characteristic cone).